Reading from the N-terminus, the 245-residue chain is tRNA pseudouridine synthase A (245 aa).

Asp-52 (nucleophile) is an active-site residue. Tyr-110 is a binding site for substrate.

It belongs to the tRNA pseudouridine synthase TruA family. In terms of assembly, homodimer.

The enzyme catalyses uridine(38/39/40) in tRNA = pseudouridine(38/39/40) in tRNA. Its function is as follows. Formation of pseudouridine at positions 38, 39 and 40 in the anticodon stem and loop of transfer RNAs. In Ruminiclostridium cellulolyticum (strain ATCC 35319 / DSM 5812 / JCM 6584 / H10) (Clostridium cellulolyticum), this protein is tRNA pseudouridine synthase A.